The following is a 1036-amino-acid chain: MVTTEVRTAVSDKEPLQRSPELDSSTDFLDNDRLKETFSSGALDFDEWTLLISEIETTSFPDDIEKLCLVYDAFLLEFPLCHGYWRKYAYHKIKLCTLEDAVEVFERAVQAATYSVAVWLDYCAFAVAAYEDPHDVSRLFERGLSFIGKDYSCCTLWDKYIEYLLGQQQWSSLANVYLRTLKYPSKKLDLYYKNFRKIAASLKEKIKCRIDVNGDLSSDPMEEDLVHTRHTDEEISIVVRELMGPSSSSAVSKALHTYLSIGEQFYQDSRQLMEKISCFETQIRRPYFHVKPLDTNQLDNWHAYLSFGETYGDFDWAINLYERCLIPCANYTEFWFRYVDFVESKGGRELANFALARASQTFVKSASVIHLFNARFKEHVGDASAASVALSRCGEELGFGFVENVTKKANMEKRLGNFEAAVTTYREALNKTLIGKENLETTARLYVQFSRLKYVITNSADDAAQILLEGNENVPHCKLLLEELMRLLMMHGGSRQVDLLDPIIDKELSHQADSSDGLSAEDKEEISNLYMEFIDLSGTIHDVRKALGRHIKLFPHSARAKLRGSRPSGNLFRELIQRREKTRERLNQDLLTNKGISSIVDSPPKEKKESSLDSYGTQSKDAVRADYVNTEPNQGCLTSGHLVEGNDNVIERETLCESQSDLSMGLKANEGGKRSHEVSLPIQASPEHGFVTKQAHFSSNSVDTVKSDAIVIQPSGSQSPQSYQSQESLRQTGRNRYHRRDLNQMHRDSKPRSQERPPQMPYSPVGTGREILGQHMAFTHQDNRVALQSSTSQNPQNQFQNSALQMHPVVQTSNAYPQSQIHGQHMIVSPPESQNPQNQCQNSTSQVQTSFAYPQTQIPQNPVQSNYQQEGQMQSHEAYNQMWQQYYYSYYYYQQQQQLMSEQPQPNQNPQPQLDQNLVQLLSKQYQSQAKTQYLQPQQVEQVNTQQQSQEPQNQQQIQFQQQQQQQEWFQQQQQWQQQQYLLYIQQQQLQGEAKGDEQRLSMPQGSTTNSDIQKSQESGAVNEANLSSDTSISSI.

The segment at M1 to S24 is disordered. HAT repeat units follow at residues D62–K94, C96–A128, E131–G166, Q168–S201, C278–T310, and G312–S344. Disordered stretches follow at residues G595–Q618, P714–T767, and K995–I1036. Residues P714–Q726 show a composition bias toward low complexity. Residues R740–E755 show a composition bias toward basic and acidic residues. Positions S1002–I1036 are enriched in polar residues.

The protein belongs to the PRP39 family.

The protein localises to the nucleus. Involved in pre-mRNA splicing. This chain is Pre-mRNA-processing factor 39-2, found in Arabidopsis thaliana (Mouse-ear cress).